The following is a 358-amino-acid chain: Hydroxyproline O-arabinosyltransferase 2 (358 aa).

A helical; Signal-anchor transmembrane segment spans residues 7–26 (YFFPILMTLSLFLIIRYNYI).

In terms of tissue distribution, ubiquitous.

It is found in the golgi apparatus. The protein resides in the cis-Golgi network membrane. The catalysed reaction is trans-4-hydroxy-L-prolyl-[protein] + UDP-beta-L-arabinofuranose = O-(beta-L-arabinofuranosyl)-trans-4-hydroxy-L-prolyl-[protein] + UDP + H(+). Glycosyltransferase involved in the O-arabinosylation of several proteins including extensins and small signaling peptides. Catalyzes the transfer of the initial L-arabinose to the hydroxyl group of Hyp residues. Contributes redundantly with HPAT1 and HPAT3 to arabinosylation of EXT3. The protein is Hydroxyproline O-arabinosyltransferase 2 of Arabidopsis thaliana (Mouse-ear cress).